Reading from the N-terminus, the 392-residue chain is MSLAHTAAEYMLSDALLPDRRGSRLKGLRLELPLDKMVKFITVGFPLLLMSLAFAQEFSSGSPISCFSPSNFSVRQAAYVDSSCWDSLAHHTQDKAGQYKVKSLWPHKALPYSLLALAVAMYLPVLLWQYVAVPSLSSDLLFIISELDKSYNRSIRLVQHMLQIRQSSSDPHVFWDELEKARKERYFEFPLLERYLECKQRSHWLVATYLLRNALLLLFTSATYLYLGQFHLDVFFQDEFNCFIKTGLLHDETHVPELITCRLTSLSVFQIVSVSSAAIYTILVPVIIYNLTRLCRWDKGLLSIYEMLPAFDLLSRKMLGCPINDLNVILLFLRANISELISFSWLSVLSVLKDTTTQKHNIDTVVDFMTFVAGLEPSKPKHLTQHTYDEHA.

The Cytoplasmic portion of the chain corresponds to 1–39 (MSLAHTAAEYMLSDALLPDRRGSRLKGLRLELPLDKMVK). Residues 40–60 (FITVGFPLLLMSLAFAQEFSS) form a helical membrane-spanning segment. Topologically, residues 61-113 (GSPISCFSPSNFSVRQAAYVDSSCWDSLAHHTQDKAGQYKVKSLWPHKALPYS) are extracellular. Asn71 carries an N-linked (GlcNAc...) asparagine glycan. Residues 114-134 (LLALAVAMYLPVLLWQYVAVP) traverse the membrane as a helical segment. Over 135–215 (SLSSDLLFII…VATYLLRNAL (81 aa)) the chain is Cytoplasmic. Residues 216–236 (LLLFTSATYLYLGQFHLDVFF) form a helical membrane-spanning segment. At 237–267 (QDEFNCFIKTGLLHDETHVPELITCRLTSLS) the chain is on the extracellular side. Residues 268-288 (VFQIVSVSSAAIYTILVPVII) form a helical membrane-spanning segment. The Cytoplasmic portion of the chain corresponds to 289-392 (YNLTRLCRWD…LTQHTYDEHA (104 aa)).

The protein belongs to the pannexin family. In terms of assembly, homoheptameric. N-glycosylation may play a role in cell surface targeting. In terms of tissue distribution, expressed in skin, cartilage, heart, lung, liver, spleen, thymus and kidney. Not expressed in brain. Expressed in calvarial cells.

It is found in the cell membrane. Its subcellular location is the endoplasmic reticulum membrane. It catalyses the reaction Ca(2+)(in) = Ca(2+)(out). The enzyme catalyses ATP(in) = ATP(out). Functionally, regulator of osteoblast differentiation by functionning as a Ca(2+) channel in the endoplasmic reticulum which regulates calmodulin (CaM) pathways. Allows ATP release into the extracellular space and activation or purinergic receptors. In Mus musculus (Mouse), this protein is Pannexin-3 (Panx3).